Reading from the N-terminus, the 481-residue chain is ATP synthase subunit beta (481 aa).

160 to 167 is an ATP binding site; sequence GGAGVGKT.

It belongs to the ATPase alpha/beta chains family. As to quaternary structure, F-type ATPases have 2 components, CF(1) - the catalytic core - and CF(0) - the membrane proton channel. CF(1) has five subunits: alpha(3), beta(3), gamma(1), delta(1), epsilon(1). CF(0) has three main subunits: a(1), b(2) and c(9-12). The alpha and beta chains form an alternating ring which encloses part of the gamma chain. CF(1) is attached to CF(0) by a central stalk formed by the gamma and epsilon chains, while a peripheral stalk is formed by the delta and b chains.

Its subcellular location is the cell inner membrane. It catalyses the reaction ATP + H2O + 4 H(+)(in) = ADP + phosphate + 5 H(+)(out). Functionally, produces ATP from ADP in the presence of a proton gradient across the membrane. The catalytic sites are hosted primarily by the beta subunits. The polypeptide is ATP synthase subunit beta (Myxococcus xanthus (strain DK1622)).